The sequence spans 276 residues: Putative respiratory nitrate reductase heme subunit ORF7 (276 aa).

Residues Met138 and Lys228 each contribute to the heme b site.

In terms of assembly, probable multiprotein complex; a catalytic heterodimer of an alpha and beta chain is proposed to associate with additional subunits involved in membrane attachment and electron transfer. It depends on heme b as a cofactor.

It is found in the cell membrane. Its function is as follows. The respiratory membrane-bound nitrate reductase enzyme complex plays a role in generation of metabolic energy by using nitrate as a terminal electron acceptor during anaerobic conditions. May transfer electrons to the iron-sulfur centers of the catalytic beta subunit. The protein is Putative respiratory nitrate reductase heme subunit ORF7 of Haloferax mediterranei (strain ATCC 33500 / DSM 1411 / JCM 8866 / NBRC 14739 / NCIMB 2177 / R-4) (Halobacterium mediterranei).